A 307-amino-acid polypeptide reads, in one-letter code: UDP-3-O-acyl-N-acetylglucosamine deacetylase (307 aa).

His-78, His-241, and Asp-245 together coordinate Zn(2+). His-268 acts as the Proton donor in catalysis.

This sequence belongs to the LpxC family. Requires Zn(2+) as cofactor.

It catalyses the reaction a UDP-3-O-[(3R)-3-hydroxyacyl]-N-acetyl-alpha-D-glucosamine + H2O = a UDP-3-O-[(3R)-3-hydroxyacyl]-alpha-D-glucosamine + acetate. It participates in glycolipid biosynthesis; lipid IV(A) biosynthesis; lipid IV(A) from (3R)-3-hydroxytetradecanoyl-[acyl-carrier-protein] and UDP-N-acetyl-alpha-D-glucosamine: step 2/6. Functionally, catalyzes the hydrolysis of UDP-3-O-myristoyl-N-acetylglucosamine to form UDP-3-O-myristoylglucosamine and acetate, the committed step in lipid A biosynthesis. The sequence is that of UDP-3-O-acyl-N-acetylglucosamine deacetylase from Variovorax paradoxus (strain S110).